A 241-amino-acid polypeptide reads, in one-letter code: Phycocyanobilin:ferredoxin oxidoreductase (241 aa).

Belongs to the HY2 family.

The enzyme catalyses (2R,3Z)-phycocyanobilin + 4 oxidized [2Fe-2S]-[ferredoxin] = biliverdin IXalpha + 4 reduced [2Fe-2S]-[ferredoxin] + 4 H(+). In terms of biological role, catalyzes the four-electron reduction of biliverdin IX-alpha (2-electron reduction at both the A and D rings); the reaction proceeds via an isolatable 2-electron intermediate, 181,182-dihydrobiliverdin. This chain is Phycocyanobilin:ferredoxin oxidoreductase, found in Prochlorococcus marinus (strain MIT 9301).